The primary structure comprises 128 residues: B2 protein (128 aa).

The N-terminal stretch at Ser1–Ala10 is a signal peptide. 2 cysteine pairs are disulfide-bonded: Cys26-Cys57 and Cys97-Cys114.

Belongs to the PBP/GOBP family. N-glycosylated. As to expression, tubular accessory sex gland.

Its subcellular location is the secreted. May be a carrier protein for lipids. This chain is B2 protein, found in Tenebrio molitor (Yellow mealworm beetle).